Reading from the N-terminus, the 303-residue chain is Cell division protein ZipA (303 aa).

The Periplasmic portion of the chain corresponds to 1 to 6; the sequence is MMQDLR. A helical membrane pass occupies residues 7–27; that stretch reads LILIIVGAIAIIALLLHGLWT. Over 28 to 303 the chain is Cytoplasmic; sequence SRKERSSLFR…RIRSTLGVQV (276 aa). 3 disordered regions span residues 39–61, 66–85, and 124–159; these read RPVKRHKHDRQNSFVDDSDDEAF, KPYAHKQVKSHQEYKAEPAI, and EQEPQLGLFEFEEQNESERNGSAIEEKSQEAAGEKE. Composition is skewed to basic and acidic residues over residues 75 to 85 and 139 to 159; these read SHQEYKAEPAI and ESERNGSAIEEKSQEAAGEKE.

This sequence belongs to the ZipA family. As to quaternary structure, interacts with FtsZ via their C-terminal domains.

The protein localises to the cell inner membrane. Functionally, essential cell division protein that stabilizes the FtsZ protofilaments by cross-linking them and that serves as a cytoplasmic membrane anchor for the Z ring. Also required for the recruitment to the septal ring of downstream cell division proteins. The chain is Cell division protein ZipA from Photorhabdus laumondii subsp. laumondii (strain DSM 15139 / CIP 105565 / TT01) (Photorhabdus luminescens subsp. laumondii).